A 251-amino-acid polypeptide reads, in one-letter code: FHA domain-containing protein FHA1 (251 aa).

An FHA domain is found at 32–89 (IILGRNSKKSTVDVDLSSLGGGMNISRNHARIFYDFTRRRFSLEVLGKNGCFVEGVLH). The segment covering 163 to 174 (EYDDEDDDEEED) has biased composition (acidic residues). Residues 163–209 (EYDDEDDDEEEDIRGSGKKTWRDGHEGVYASGEKKREGRSKADREAD) are disordered. Positions 182 to 206 (TWRDGHEGVYASGEKKREGRSKADR) are enriched in basic and acidic residues.

As to expression, expressed in roots and vascular tissues near the shoot apex in young seedlings.

The protein localises to the nucleus. In terms of biological role, may play a role in the control of plant organ development. Does not show transactivation activity in yeast. The protein is FHA domain-containing protein FHA1 of Arabidopsis thaliana (Mouse-ear cress).